Consider the following 787-residue polypeptide: Protocadherin beta-15 (787 aa).

The first 26 residues, 1–26 (MEPAGERFPEQRQVLILLLLLEVTLA), serve as a signal peptide directing secretion. At 27–690 (GWEPRRYSVM…AQADSLTVYL (664 aa)) the chain is on the extracellular side. Cadherin domains are found at residues 35-133 (VMEE…SPEF), 138-242 (ITLK…APEF), 247-347 (YEVQ…FPEL), 352-451 (LTSP…APAF), and 456-561 (YTLF…SPFV). N-linked (GlcNAc...) asparagine glycosylation is found at Asn418 and Asn436. N-linked (GlcNAc...) asparagine glycosylation is present at Asn567. One can recognise a Cadherin 6 domain in the interval 568–671 (GSAPCTELVP…LVDGFSQPYL (104 aa)). The chain crosses the membrane as a helical span at residues 691–711 (VVALASVSSLFLFSVLLFVAV). The Cytoplasmic segment spans residues 712 to 787 (RLCRRSRAAS…DSRRKSEFLE (76 aa)).

It localises to the cell membrane. Its function is as follows. Potential calcium-dependent cell-adhesion protein. May be involved in the establishment and maintenance of specific neuronal connections in the brain. This is Protocadherin beta-15 (PCDHB15) from Pan troglodytes (Chimpanzee).